The chain runs to 373 residues: MVSHPIWAEIDLSAIKNNIKEIRRITNPKSQVMAVVKANAYGHGSVEVSKICLENGADRLAVARSTEALELRDAGITCPILVFGYVTEEEILKMVENDITLTVYSLEIANSIQKIAEKLGKHSKIHIKVDTGMSRLGFLPEKSSVETIKKIRELENIEVEGIYTHFADADNSDKTYTTMQFSKFTSFLHDLEENGIDIPIKHASNSAAIIDHPETHLNMVRPGIILYGLYPSELVHKERINLQPAMSLKVLVTHVKDVPENTKISYGCTFETKKQSKIASLPIGYADGFTRMLRNGNVLIHGLRVPVVGRICMDQCMIDVTSIENVNVGDVVTVFGKDGTEKISIEEFGNKLGTINYELVCMVSARVPRIYLH.

Residue Lys37 is the Proton acceptor; specific for D-alanine of the active site. An N6-(pyridoxal phosphate)lysine modification is found at Lys37. A substrate-binding site is contributed by Arg135. The active-site Proton acceptor; specific for L-alanine is Tyr266. Met313 provides a ligand contact to substrate.

It belongs to the alanine racemase family. Pyridoxal 5'-phosphate serves as cofactor.

The enzyme catalyses L-alanine = D-alanine. It participates in amino-acid biosynthesis; D-alanine biosynthesis; D-alanine from L-alanine: step 1/1. In terms of biological role, catalyzes the interconversion of L-alanine and D-alanine. This organism is able to use both L- and D-alanine as a nitrogen source. May also prevent D-alanine from interfering with the use of L-alanine. The protein is Alanine racemase (alr) of Methanococcus maripaludis (strain DSM 14266 / JCM 13030 / NBRC 101832 / S2 / LL).